The sequence spans 290 residues: N-acetylmannosamine kinase (290 aa).

ATP contacts are provided by residues 6-13 and 132-139; these read ALDIGGTK and GVGGGIIL. Histidine 156, cysteine 166, cysteine 168, and cysteine 173 together coordinate Zn(2+).

Belongs to the ROK (NagC/XylR) family. NanK subfamily. In terms of assembly, homodimer.

The catalysed reaction is an N-acyl-D-mannosamine + ATP = an N-acyl-D-mannosamine 6-phosphate + ADP + H(+). The protein operates within amino-sugar metabolism; N-acetylneuraminate degradation; D-fructose 6-phosphate from N-acetylneuraminate: step 2/5. Catalyzes the phosphorylation of N-acetylmannosamine (ManNAc) to ManNAc-6-P. In Yersinia pestis (strain Pestoides F), this protein is N-acetylmannosamine kinase.